Reading from the N-terminus, the 237-residue chain is ATP synthase subunit 4, mitochondrial (237 aa).

A mitochondrion-targeting transit peptide spans 1–30 (MFRALTLKASARPVVAGLCSRQAPIAAVRY).

This sequence belongs to the eukaryotic ATPase B chain family.

The protein localises to the mitochondrion. It is found in the mitochondrion inner membrane. Functionally, mitochondrial membrane ATP synthase (F(1)F(0) ATP synthase or Complex V) produces ATP from ADP in the presence of a proton gradient across the membrane which is generated by electron transport complexes of the respiratory chain. F-type ATPases consist of two structural domains, F(1) - containing the extramembraneous catalytic core, and F(0) - containing the membrane proton channel, linked together by a central stalk and a peripheral stalk. During catalysis, ATP synthesis in the catalytic domain of F(1) is coupled via a rotary mechanism of the central stalk subunits to proton translocation. Part of the complex F(0) domain and the peripheric stalk, which acts as a stator to hold the catalytic alpha(3)beta(3) subcomplex and subunit a/ATP6 static relative to the rotary elements. In Kluyveromyces lactis (strain ATCC 8585 / CBS 2359 / DSM 70799 / NBRC 1267 / NRRL Y-1140 / WM37) (Yeast), this protein is ATP synthase subunit 4, mitochondrial (ATP4).